The following is a 274-amino-acid chain: Anamorsin homolog (274 aa).

The segment at 1–154 is N-terminal SAM-like domain; the sequence is MDRTRKQCSV…KKPSWKIGSS (154 aa). The linker stretch occupies residues 154 to 185; the sequence is SFALKKSTKGSVKVNLDDDLIDEDSLLTEEDM. Residues C196, C205, C208, and C210 each contribute to the [2Fe-2S] cluster site. The interval 196–210 is fe-S binding site A; sequence CEVGSTRKACKNCTC. C235, C238, C246, and C249 together coordinate [4Fe-4S] cluster. Short sequence motifs (cx2C motif) lie at residues 235–238 and 246–249; these read CGSC and CSTC. A fe-S binding site B region spans residues 235-249; the sequence is CGSCGLGDAFRCSTC.

This sequence belongs to the anamorsin family. As to quaternary structure, monomer. Requires [2Fe-2S] cluster as cofactor. [4Fe-4S] cluster serves as cofactor.

The protein resides in the cytoplasm. It is found in the mitochondrion intermembrane space. Its function is as follows. Component of the cytosolic iron-sulfur (Fe-S) protein assembly (CIA) machinery. Required for the maturation of extramitochondrial Fe-S proteins. Part of an electron transfer chain functioning in an early step of cytosolic Fe-S biogenesis, facilitating the de novo assembly of a [4Fe-4S] cluster on the cytosolic Fe-S scaffold complex. Electrons are transferred from NADPH via a FAD- and FMN-containing diflavin oxidoreductase. Together with the diflavin oxidoreductase, also required for the assembly of the diferric tyrosyl radical cofactor of ribonucleotide reductase (RNR), probably by providing electrons for reduction during radical cofactor maturation in the catalytic small subunit. The polypeptide is Anamorsin homolog (Ricinus communis (Castor bean)).